We begin with the raw amino-acid sequence, 157 residues long: Phosphopantetheine adenylyltransferase (157 aa).

Residue Ser-9 participates in substrate binding. Residues 9 to 10 and His-17 contribute to the ATP site; that span reads SF. Substrate contacts are provided by Lys-41, Val-73, and Lys-87. ATP is bound by residues 88–90, Glu-98, and 122–128; these read GLR and YSFVSSS.

Belongs to the bacterial CoaD family. As to quaternary structure, homohexamer. The cofactor is Mg(2+).

Its subcellular location is the cytoplasm. It carries out the reaction (R)-4'-phosphopantetheine + ATP + H(+) = 3'-dephospho-CoA + diphosphate. Its pathway is cofactor biosynthesis; coenzyme A biosynthesis; CoA from (R)-pantothenate: step 4/5. Reversibly transfers an adenylyl group from ATP to 4'-phosphopantetheine, yielding dephospho-CoA (dPCoA) and pyrophosphate. The sequence is that of Phosphopantetheine adenylyltransferase from Mycobacterium marinum (strain ATCC BAA-535 / M).